The primary structure comprises 447 residues: GTPase Der (447 aa).

EngA-type G domains lie at 4–165 and 180–357; these read QIIA…PKEK and VQIV…KNWN. GTP is bound by residues 10-17, 57-61, 119-122, 186-193, 233-237, and 298-301; these read GRPNVGKS, DTPGL, NKCE, GRPNAGKS, DTAGL, and NKWD. One can recognise a KH-like domain in the interval 358–443; the sequence is KKITTSKLNE…PIRFAYVKTK (86 aa).

The protein belongs to the TRAFAC class TrmE-Era-EngA-EngB-Septin-like GTPase superfamily. EngA (Der) GTPase family. In terms of assembly, associates with the 50S ribosomal subunit.

Its function is as follows. GTPase that plays an essential role in the late steps of ribosome biogenesis. The polypeptide is GTPase Der (Rickettsia canadensis (strain McKiel)).